Consider the following 734-residue polypeptide: Polyribonucleotide nucleotidyltransferase (734 aa).

Mg(2+) is bound by residues aspartate 503 and aspartate 509. Positions 570-629 constitute a KH domain; sequence PKLSTIQVPVDAIGMIIGKGGETIRSITEETGAQINVDDDGTVTISSPNGESAAAAIETI. Residues 639–713 enclose the S1 motif domain; that stretch reads GTIYMGKVKD…GKIRYALSIK (75 aa).

Belongs to the polyribonucleotide nucleotidyltransferase family. Mg(2+) is required as a cofactor.

Its subcellular location is the cytoplasm. The catalysed reaction is RNA(n+1) + phosphate = RNA(n) + a ribonucleoside 5'-diphosphate. Its function is as follows. Involved in mRNA degradation. Catalyzes the phosphorolysis of single-stranded polyribonucleotides processively in the 3'- to 5'-direction. The chain is Polyribonucleotide nucleotidyltransferase from Chlorobium phaeobacteroides (strain BS1).